The following is a 206-amino-acid chain: Glycerol-3-phosphate acyltransferase (206 aa).

5 consecutive transmembrane segments (helical) span residues 14–34 (IALA…GLIL), 67–87 (ATLL…GYFL), 91–111 (AAII…WIGF), 124–144 (LLGV…AVAF), and 148–168 (YSSL…LILG).

It belongs to the PlsY family. Probably interacts with PlsX.

It is found in the cell inner membrane. The catalysed reaction is an acyl phosphate + sn-glycerol 3-phosphate = a 1-acyl-sn-glycero-3-phosphate + phosphate. The protein operates within lipid metabolism; phospholipid metabolism. Catalyzes the transfer of an acyl group from acyl-phosphate (acyl-PO(4)) to glycerol-3-phosphate (G3P) to form lysophosphatidic acid (LPA). This enzyme utilizes acyl-phosphate as fatty acyl donor, but not acyl-CoA or acyl-ACP. In Rhizobium etli (strain CIAT 652), this protein is Glycerol-3-phosphate acyltransferase.